We begin with the raw amino-acid sequence, 144 residues long: Protein BUD31 homolog (144 aa).

Residues 2–10 (PKVRRSRKP) carry the Nuclear localization signal motif.

The protein belongs to the BUD31 (G10) family.

Its subcellular location is the nucleus. The sequence is that of Protein BUD31 homolog from Branchiostoma belcheri (Amphioxus).